A 154-amino-acid chain; its full sequence is 6,7-dimethyl-8-ribityllumazine synthase (154 aa).

5-amino-6-(D-ribitylamino)uracil contacts are provided by residues Phe-22, 56–58 (SFE), and 80–82 (AVI). Residue 85-86 (ST) coordinates (2S)-2-hydroxy-3-oxobutyl phosphate. His-88 acts as the Proton donor in catalysis. Residue Tyr-113 participates in 5-amino-6-(D-ribitylamino)uracil binding. Arg-127 serves as a coordination point for (2S)-2-hydroxy-3-oxobutyl phosphate.

This sequence belongs to the DMRL synthase family. Forms an icosahedral capsid composed of 60 subunits, arranged as a dodecamer of pentamers.

It carries out the reaction (2S)-2-hydroxy-3-oxobutyl phosphate + 5-amino-6-(D-ribitylamino)uracil = 6,7-dimethyl-8-(1-D-ribityl)lumazine + phosphate + 2 H2O + H(+). It functions in the pathway cofactor biosynthesis; riboflavin biosynthesis; riboflavin from 2-hydroxy-3-oxobutyl phosphate and 5-amino-6-(D-ribitylamino)uracil: step 1/2. Catalyzes the formation of 6,7-dimethyl-8-ribityllumazine by condensation of 5-amino-6-(D-ribitylamino)uracil with 3,4-dihydroxy-2-butanone 4-phosphate. This is the penultimate step in the biosynthesis of riboflavin. The sequence is that of 6,7-dimethyl-8-ribityllumazine synthase from Persephonella marina (strain DSM 14350 / EX-H1).